A 124-amino-acid chain; its full sequence is Transcription initiation factor TFIID subunit 13 (124 aa).

Over residues 1–16 (MADEEEDPTFEEENEE) the composition is skewed to acidic residues. The disordered stretch occupies residues 1 to 28 (MADEEEDPTFEEENEEIGGGAEGGQGKR). A Histone-fold domain is found at 32–74 (FSKELRCMMYGFGDDQNPYTESVDILEDLVIEFITEMTHKAMS).

Belongs to the TAF13 family. As to quaternary structure, component of the TFIID basal transcription factor complex, composed of TATA-box-binding protein TBP, and a number of TBP-associated factors (TAFs), including TAF1, TAF2, TAF3, TAF4, TAF5, TAF6, TAF7, TAF8, TAF9, TAF10, TAF11, TAF12 and TAF13. Interacts with TBP, and more strongly with TAF10 and TAF11.

It localises to the nucleus. Its function is as follows. The TFIID basal transcription factor complex plays a major role in the initiation of RNA polymerase II (Pol II)-dependent transcription. TFIID recognizes and binds promoters via its subunit TBP, a TATA-box-binding protein, and promotes assembly of the pre-initiation complex (PIC). The TFIID complex consists of TBP and TBP-associated factors (TAFs), including TAF1, TAF2, TAF3, TAF4, TAF5, TAF6, TAF7, TAF8, TAF9, TAF10, TAF11, TAF12 and TAF13. TAF13, together with TAF11 and TBP, play key roles during promoter binding by the TFIID and TFIIA transcription factor complexes. The chain is Transcription initiation factor TFIID subunit 13 from Bos taurus (Bovine).